A 275-amino-acid chain; its full sequence is Ciliary microtubule inner protein 2B (275 aa).

Disordered regions lie at residues 62 to 84 (PPIR…RGQE) and 125 to 169 (EKQG…SPYS). 2 stretches are compositionally biased toward basic and acidic residues: residues 71–84 (EVPR…RGQE) and 125–147 (EKQG…KDQV).

The protein belongs to the CIMIP2 family. Microtubule inner protein component of sperm flagellar doublet microtubules. Expressed in airway epithelial cells.

Its subcellular location is the cytoplasm. The protein resides in the cytoskeleton. The protein localises to the cilium axoneme. It localises to the flagellum axoneme. In terms of biological role, microtubule inner protein (MIP) part of the dynein-decorated doublet microtubules (DMTs) in cilia axoneme, which is required for motile cilia beating. In Homo sapiens (Human), this protein is Ciliary microtubule inner protein 2B.